Consider the following 545-residue polypeptide: Chaperonin GroEL (545 aa).

Residues 29–32 (TLGP), Lys50, 86–90 (DGTTT), Gly413, and Asp495 contribute to the ATP site.

The protein belongs to the chaperonin (HSP60) family. Forms a cylinder of 14 subunits composed of two heptameric rings stacked back-to-back. Interacts with the co-chaperonin GroES.

It localises to the cytoplasm. The enzyme catalyses ATP + H2O + a folded polypeptide = ADP + phosphate + an unfolded polypeptide.. Its function is as follows. Together with its co-chaperonin GroES, plays an essential role in assisting protein folding. The GroEL-GroES system forms a nano-cage that allows encapsulation of the non-native substrate proteins and provides a physical environment optimized to promote and accelerate protein folding. The protein is Chaperonin GroEL of Borreliella afzelii (strain PKo) (Borrelia afzelii).